The chain runs to 434 residues: Monodehydroascorbate reductase, seedling isozyme (434 aa).

Residues 13–16, E40, R47, K52, I95, and 146–147 each bind FAD; these read GGVA and RE. Residues 171–177, E195, R201, and G260 each bind NAD(+); that span reads GGYIGLE. 173–177 contributes to the NADP(+) binding site; sequence YIGLE. 2 residues coordinate NADP(+): R201 and G260. Residue D297 coordinates FAD. 313-314 serves as a coordination point for NAD(+); the sequence is EH. 313-314 is a binding site for NADP(+); sequence EH. Position 315 (V315) interacts with FAD. R319 provides a ligand contact to L-ascorbate. Residue Y348 participates in FAD binding. Y348 contributes to the NAD(+) binding site. An NADP(+)-binding site is contributed by Y348. R350 provides a ligand contact to L-ascorbate.

It belongs to the FAD-dependent oxidoreductase family. Requires FAD as cofactor.

Its subcellular location is the cytoplasm. It carries out the reaction 2 monodehydro-L-ascorbate radical + NADH + H(+) = 2 L-ascorbate + NAD(+). In terms of biological role, catalyzes the conversion of monodehydroascorbate to ascorbate, oxidizing NADH in the process. This Cucumis sativus (Cucumber) protein is Monodehydroascorbate reductase, seedling isozyme.